Consider the following 68-residue polypeptide: Erythrodihydroneopterin triphosphate synthetase (68 aa).

The residue at position 66 (serine 66) is a Phosphoserine.

This chain is Erythrodihydroneopterin triphosphate synthetase, found in Cavia porcellus (Guinea pig).